We begin with the raw amino-acid sequence, 377 residues long: Bifunctional enzyme IspD/IspF (377 aa).

Positions 1–221 (MTTAAIIVAA…ERILRQDMDV (221 aa)) are 2-C-methyl-D-erythritol 4-phosphate cytidylyltransferase. Positions 222-377 (RLGNGYDVHR…ALATACLVKP (156 aa)) are 2-C-methyl-D-erythritol 2,4-cyclodiphosphate synthase. Residues Asp-228 and His-230 each contribute to the a divalent metal cation site. Residues 228-230 (DVH) and 254-255 (HS) contribute to the 4-CDP-2-C-methyl-D-erythritol 2-phosphate site. Residue His-262 participates in a divalent metal cation binding. Residues 276-278 (DIG), 352-355 (TTSE), Phe-359, and Arg-362 contribute to the 4-CDP-2-C-methyl-D-erythritol 2-phosphate site.

This sequence in the N-terminal section; belongs to the IspD/TarI cytidylyltransferase family. IspD subfamily. In the C-terminal section; belongs to the IspF family. A divalent metal cation serves as cofactor.

The catalysed reaction is 2-C-methyl-D-erythritol 4-phosphate + CTP + H(+) = 4-CDP-2-C-methyl-D-erythritol + diphosphate. It carries out the reaction 4-CDP-2-C-methyl-D-erythritol 2-phosphate = 2-C-methyl-D-erythritol 2,4-cyclic diphosphate + CMP. The protein operates within isoprenoid biosynthesis; isopentenyl diphosphate biosynthesis via DXP pathway; isopentenyl diphosphate from 1-deoxy-D-xylulose 5-phosphate: step 2/6. It participates in isoprenoid biosynthesis; isopentenyl diphosphate biosynthesis via DXP pathway; isopentenyl diphosphate from 1-deoxy-D-xylulose 5-phosphate: step 4/6. Functionally, bifunctional enzyme that catalyzes the formation of 4-diphosphocytidyl-2-C-methyl-D-erythritol from CTP and 2-C-methyl-D-erythritol 4-phosphate (MEP) (IspD), and catalyzes the conversion of 4-diphosphocytidyl-2-C-methyl-D-erythritol 2-phosphate (CDP-ME2P) to 2-C-methyl-D-erythritol 2,4-cyclodiphosphate (ME-CPP) with a corresponding release of cytidine 5-monophosphate (CMP) (IspF). The chain is Bifunctional enzyme IspD/IspF from Ruegeria pomeroyi (strain ATCC 700808 / DSM 15171 / DSS-3) (Silicibacter pomeroyi).